Here is a 421-residue protein sequence, read N- to C-terminus: Hemagglutinin-esterase (421 aa).

The first 16 residues, Met-1–Ser-16, serve as a signal peptide directing secretion. The interval Phe-7–Gly-127 is esterase domain 1. Topologically, residues Leu-17 to Leu-392 are virion surface. Residue Ser-40 is the Nucleophile of the active site. An intrachain disulfide couples Cys-44 to Cys-65. N-linked (GlcNAc...) asparagine; by host glycans are attached at residues Asn-54, Asn-89, Asn-153, Asn-236, and Asn-301. Disulfide bonds link Cys-113/Cys-162, Cys-197/Cys-276, and Cys-205/Cys-249. Residues Leu-128–Leu-266 are receptor binding. Positions Leu-267–Thr-379 are esterase domain 2. A disulfide bond links Cys-307 and Cys-312. N-linked (GlcNAc...) asparagine; by host glycosylation is present at Asn-316. Residues Asp-326 and His-329 each act as charge relay system in the active site. Cysteines 347 and 371 form a disulfide. Asn-358 carries an N-linked (GlcNAc...) asparagine; by host glycan. Residues Ile-393 to Phe-413 traverse the membrane as a helical segment. At Met-414–Leu-421 the chain is on the intravirion side. Asn-417 carries N-linked (GlcNAc...) asparagine; by host glycosylation.

The protein belongs to the influenza type C/coronaviruses hemagglutinin-esterase family. As to quaternary structure, homodimer; disulfide-linked. Forms a complex with the M protein in the pre-Golgi. Associates then with S-M complex to form a ternary complex S-M-HE. In terms of processing, N-glycosylated in the host RER.

The protein localises to the virion membrane. Its subcellular location is the host cell membrane. It catalyses the reaction N-acetyl-9-O-acetylneuraminate + H2O = N-acetylneuraminate + acetate + H(+). The catalysed reaction is N-acetyl-4-O-acetylneuraminate + H2O = N-acetylneuraminate + acetate + H(+). In terms of biological role, structural protein that makes short spikes at the surface of the virus. Contains receptor binding and receptor-destroying activities. Mediates de-O-acetylation of N-acetyl-4-O-acetylneuraminic acid, which is probably the receptor determinant recognized by the virus on the surface of erythrocytes and susceptible cells. This receptor-destroying activity is important for virus release as it probably helps preventing self-aggregation and ensures the efficient spread of the progeny virus from cell to cell. May serve as a secondary viral attachment protein for initiating infection, the spike protein being the major one. May become a target for both the humoral and the cellular branches of the immune system. The polypeptide is Hemagglutinin-esterase (Bos taurus (Bovine)).